The sequence spans 322 residues: Altered inheritance of mitochondria protein 32 (322 aa).

The protein belongs to the AIM32 family.

The protein is Altered inheritance of mitochondria protein 32 (AIM32) of Kluyveromyces lactis (strain ATCC 8585 / CBS 2359 / DSM 70799 / NBRC 1267 / NRRL Y-1140 / WM37) (Yeast).